The following is an 83-amino-acid chain: ATP synthase subunit c, chloroplastic (83 aa).

2 consecutive transmembrane segments (helical) span residues 3–23 and 57–77; these read PIIS…AAIG and LAFM…LLFA.

It belongs to the ATPase C chain family. In terms of assembly, F-type ATPases have 2 components, F(1) - the catalytic core - and F(0) - the membrane proton channel. F(1) has five subunits: alpha(3), beta(3), gamma(1), delta(1), epsilon(1). F(0) has four main subunits: a(1), b(1), b'(1) and c(10-14). The alpha and beta chains form an alternating ring which encloses part of the gamma chain. F(1) is attached to F(0) by a central stalk formed by the gamma and epsilon chains, while a peripheral stalk is formed by the delta, b and b' chains.

The protein resides in the plastid. It is found in the chloroplast thylakoid membrane. F(1)F(0) ATP synthase produces ATP from ADP in the presence of a proton or sodium gradient. F-type ATPases consist of two structural domains, F(1) containing the extramembraneous catalytic core and F(0) containing the membrane proton channel, linked together by a central stalk and a peripheral stalk. During catalysis, ATP synthesis in the catalytic domain of F(1) is coupled via a rotary mechanism of the central stalk subunits to proton translocation. Its function is as follows. Key component of the F(0) channel; it plays a direct role in translocation across the membrane. A homomeric c-ring of between 10-14 subunits forms the central stalk rotor element with the F(1) delta and epsilon subunits. This is ATP synthase subunit c, chloroplastic from Diacronema lutheri (Unicellular marine alga).